We begin with the raw amino-acid sequence, 307 residues long: 4-hydroxythreonine-4-phosphate dehydrogenase (307 aa).

Substrate is bound by residues His126 and Thr127. His156, His195, and His251 together coordinate a divalent metal cation. Residues Lys259, Asn268, and Arg277 each contribute to the substrate site.

Belongs to the PdxA family. Homodimer. Zn(2+) serves as cofactor. Requires Mg(2+) as cofactor. Co(2+) is required as a cofactor.

It localises to the cytoplasm. It catalyses the reaction 4-(phosphooxy)-L-threonine + NAD(+) = 3-amino-2-oxopropyl phosphate + CO2 + NADH. The protein operates within cofactor biosynthesis; pyridoxine 5'-phosphate biosynthesis; pyridoxine 5'-phosphate from D-erythrose 4-phosphate: step 4/5. Catalyzes the NAD(P)-dependent oxidation of 4-(phosphooxy)-L-threonine (HTP) into 2-amino-3-oxo-4-(phosphooxy)butyric acid which spontaneously decarboxylates to form 3-amino-2-oxopropyl phosphate (AHAP). The sequence is that of 4-hydroxythreonine-4-phosphate dehydrogenase from Helicobacter pylori (strain P12).